An 88-amino-acid chain; its full sequence is MGSLSPWHWAILAVVVIVLFGAKKLPDAARSLGKSMRIFKSEMREMQSETKAEPSAIETNTANPTPVQSQRIDPAAATGQDQTEARPA.

The helical transmembrane segment at 1–21 threads the bilayer; it reads MGSLSPWHWAILAVVVIVLFG. The span at 43–52 shows a compositional bias: basic and acidic residues; the sequence is MREMQSETKA. A disordered region spans residues 43-88; sequence MREMQSETKAEPSAIETNTANPTPVQSQRIDPAAATGQDQTEARPA. Residues 57-71 show a composition bias toward polar residues; it reads IETNTANPTPVQSQR.

Belongs to the TatA/E family. As to quaternary structure, the Tat system comprises two distinct complexes: a TatABC complex, containing multiple copies of TatA, TatB and TatC subunits, and a separate TatA complex, containing only TatA subunits. Substrates initially bind to the TatABC complex, which probably triggers association of the separate TatA complex to form the active translocon.

It is found in the cell membrane. In terms of biological role, part of the twin-arginine translocation (Tat) system that transports large folded proteins containing a characteristic twin-arginine motif in their signal peptide across membranes. TatA could form the protein-conducting channel of the Tat system. The chain is Sec-independent protein translocase protein TatA from Mycobacterium marinum (strain ATCC BAA-535 / M).